The following is a 394-amino-acid chain: Elongation factor Tu 1 (394 aa).

In terms of domain architecture, tr-type G spans 9–204; the sequence is KPHCNIGTIG…AIDDYIPQPT (196 aa). Residues 18 to 25 form a G1 region; the sequence is GHVDHGKT. 18-25 contributes to the GTP binding site; the sequence is GHVDHGKT. Residue T25 participates in Mg(2+) binding. Residues 61–65 are G2; the sequence is GITIQ. The tract at residues 82 to 85 is G3; it reads DCPG. GTP-binding positions include 82–86 and 137–140; these read DCPGH and NKID. Positions 137 to 140 are G4; the sequence is NKID. A G5 region spans residues 174 to 176; sequence SAL.

The protein belongs to the TRAFAC class translation factor GTPase superfamily. Classic translation factor GTPase family. EF-Tu/EF-1A subfamily. Monomer.

It localises to the cytoplasm. It catalyses the reaction GTP + H2O = GDP + phosphate + H(+). Functionally, GTP hydrolase that promotes the GTP-dependent binding of aminoacyl-tRNA to the A-site of ribosomes during protein biosynthesis. The sequence is that of Elongation factor Tu 1 from Orientia tsutsugamushi (strain Boryong) (Rickettsia tsutsugamushi).